The primary structure comprises 636 residues: Dehydrogenase ARMGADRAFT_1018426 (636 aa).

Positions 1-19 are cleaved as a signal peptide; sequence MPALTYLLLAAIGASTVHS. FAD contacts are provided by residues 49–50 and 70–71; these read TA and EG. A glycan (N-linked (GlcNAc...) asparagine) is linked at asparagine 99. Residues tryptophan 104 and 134-137 contribute to the FAD site; that span reads NGLT. A glycan (N-linked (GlcNAc...) asparagine) is linked at asparagine 253. Position 280 (valine 280) interacts with FAD. Residues asparagine 333, asparagine 380, asparagine 394, and asparagine 498 are each glycosylated (N-linked (GlcNAc...) asparagine). Histidine 570 (proton acceptor) is an active-site residue. FAD-binding positions include alanine 603 and 614 to 615; that span reads PS.

Belongs to the GMC oxidoreductase family. Requires FAD as cofactor.

Its pathway is secondary metabolite biosynthesis. Functionally, dehydrogenase, part of the gene cluster that mediates the biosynthesis of melleolides, a range of antifungal and phytotoxic polyketide derivatives composed of an orsellinic acid (OA) moiety esterified to various sesquiterpene alcohols. The first step in melleolides biosynthesis is performed by the delta(6)-protoilludene synthase PRO1 which catalyzes the cyclization of farnesyl diphosphate to protoilludene. The orsellinic acid synthase armB produces OA by condensing acetyl-CoA with 3 malonyl-CoA units in a three-round chain elongation reaction folowed by a C2-C7 ring closure. ArmB further catalyzes the trans-esterification of OA to the various sesquiterpene alcohols resulting from the hydroxylation of protoilludene. The melleolides cluster also includes 5 cytochrome P450 monooxygenases, 4 NAD(+)-dependent oxidoreductases, one flavin-dependent oxidoreductase, and one O-methyltransferase. The cytochrome P450 monooxygenases may be involved in protoilludene hydroxylation to elaborate melleolides with multiple alcohol groups, such as melleolide D, which carries alcohol functionalities at C-4, C-5, C-10, and C-13. The role of the NAD(+)-dependent enzymes remains unknown. Numerous melleolides, including arnamial, show 5'-O-methylation of the aromatic moiety which may be catalyzed by the methyltransferase encoded in the cluster. The flavin-dependent oxidoreductase might represent the dehydrogenase yielding the aldehyde in position 1 of arnamial and other melleolides. Finally, several halogenase localized outside of the cluster, are able to catalyze the transfer of a single chlorine atom to the melleolide backbone, resulting in a 6'-chloromelleolide product. The polypeptide is Dehydrogenase ARMGADRAFT_1018426 (Armillaria gallica (Bulbous honey fungus)).